The sequence spans 122 residues: MKRAYRLRTPEQYQRVRRDGRTWDAGMLMLNAAPNRRRLSRCGFVTPKRLGGAVTRNRIRRRVREAVRLLYPQIVPGWDIVFIARSPALAEIAFPQLQALVQQALQRAGVLQASDSGQSDMG.

Belongs to the RnpA family. Consists of a catalytic RNA component (M1 or rnpB) and a protein subunit.

It catalyses the reaction Endonucleolytic cleavage of RNA, removing 5'-extranucleotides from tRNA precursor.. RNaseP catalyzes the removal of the 5'-leader sequence from pre-tRNA to produce the mature 5'-terminus. It can also cleave other RNA substrates such as 4.5S RNA. The protein component plays an auxiliary but essential role in vivo by binding to the 5'-leader sequence and broadening the substrate specificity of the ribozyme. This chain is Ribonuclease P protein component, found in Roseiflexus sp. (strain RS-1).